A 483-amino-acid chain; its full sequence is M protein, serotype 6 (483 aa).

The signal sequence occupies residues 1–42 (MAKNNTNRHYSLRKLKKGTASVAVALSVIGAGLVVNTNEVSA). Residues 54-171 (DKARELLNKY…IGTLKKTLDE (118 aa)) adopt a coiled-coil conformation. 8 consecutive repeat copies span residues 69-75 (MLQANND), 76-82 (KLTTENN), 83-89 (NLTDQNK), 90-96 (NLTTENK), 97-103 (NLTDQNK), 104-110 (NLTTENK), 111-117 (NLTDQNK), and 118-124 (NLTTENK). The interval 69–138 (MLQANNDKLT…EENRLTTENK (70 aa)) is 10 X 7 AA approximate tandem repeats of [KMNR]-L-[TQ]-[TDA]-[ENQ]-N-[NDK]. Residues 74-87 (NDKLTTENNNLTDQ) show a composition bias toward polar residues. The interval 74 to 157 (NDKLTTENNN…EEEAANKERE (84 aa)) is disordered. Residues 88–113 (NKNLTTENKNLTDQNKNLTTENKNLT) show a composition bias toward low complexity. Composition is skewed to basic and acidic residues over residues 122–135 (ENKE…RLTT) and 143–157 (KLSE…KERE). The 9-1; approximate repeat unit spans residues 125 to 131 (ELKAEEN). A run of 5 repeats spans residues 132–138 (RLTTENK), 157–181 (ENKE…AKEQ), 182–206 (ESKE…AKEQ), 207–231 (ESKE…AKEQ), and 232–256 (ESKE…AREQ). The interval 157–269 (ENKEAIGTLK…QDIGALKQEL (113 aa)) is 4.5 X 25 AA tandem repeats of E-[NS]-K-E-[TA]-I-G-T-L-K-K-[TI]-L-D-E-T-V-K-D-K-I-A-[KR]-E-Q. Disordered stretches follow at residues 255-298 (EQKS…EAKK) and 314-345 (VKEE…VEKA). The stretch at 257–269 (KSKQDIGALKQEL) is one 5-2; truncated repeat. 2 stretches are compositionally biased toward basic and acidic residues: residues 268–298 (ELAK…EAKK) and 328–345 (LRRD…VEKA). 2 C repeats span residues 270–304 (AKKD…EKDL) and 312–346 (DKVK…EKAL). The tract at residues 279 to 347 (SEASRKGLRR…AKKQVEKALE (69 aa)) is binding to CD46. Residues 279 to 347 (SEASRKGLRR…AKKQVEKALE (69 aa)) are two directly repeated 27 amino acid blocks separated by 15 amino acids. A coiled-coil region spans residues 280–408 (EASRKGLRRD…LAKLRAGKAS (129 aa)). The tract at residues 348-411 (EANSKLAALE…LRAGKASDSQ (64 aa)) is hydrophilic. D repeat units follow at residues 379–384 (AKLEAE), 385–390 (AKALKE), 393–398 (AKQAEE), and 400–405 (AKLRAG). Positions 400–455 (AKLRAGKASDSQTPDAKPGNKVVPGKGQAPQAGTKPNQNKAPMKETKRQLPSTGET) are disordered. Residues 449 to 453 (LPSTG) carry the LPXTG sorting signal motif. Threonine 452 is modified (pentaglycyl murein peptidoglycan amidated threonine). Positions 453 to 483 (GETANPFFTAAALTVMATAGVAAVVKRKEEN) are cleaved as a propeptide — removed by sortase.

The protein belongs to the M protein family.

It localises to the secreted. The protein localises to the cell wall. Mediates the attachment of S.pyogenes to skin epithelial cells through the binding of the human membrane cofactor protein CD46. Also binds to the factor H and factor H-like protein 1. These interactions could contribute to the fact that the M6 protein protects the bacterium from the phagocytosis by regulating the complement activation on the bacterial surface. In Streptococcus pyogenes, this protein is M protein, serotype 6 (emm6).